Consider the following 505-residue polypeptide: Olfactomedin-4 (505 aa).

The first 18 residues, 1–18, serve as a signal peptide directing secretion; that stretch reads MSYSLLFLLALQFCLGSA. Asparagine 64 and asparagine 128 each carry an N-linked (GlcNAc...) asparagine glycan. Residues 174 to 225 adopt a coiled-coil conformation; sequence HIIDMLEVEIRNMTLLVEKLESLDQNNVLSIRRQILALKTKLKECEASKSDL. The Olfactomedin-like domain maps to 237–499; the sequence is SCSHGGVVNI…LLNYDLVFLQ (263 aa). A disulfide bridge connects residues cysteine 238 and cysteine 429.

In terms of assembly, homomultimer; disulfide-linked. Interacts with NDUFA13. Interacts with cell surface lectins (locutions ricinus communis agglutinin I, concanavalin A and wheat germ agglutinin) and cadherin. In terms of processing, N-glycosylated.

The protein localises to the secreted. Its subcellular location is the extracellular space. The protein resides in the mitochondrion. In terms of biological role, may promote proliferation of pancreatic cancer cells by favoring the transition from the S to G2/M phase. In myeloid leukemic cell lines, inhibits cell growth and induces cell differentiation and apoptosis. May play a role in the inhibition of EIF4EBP1 phosphorylation/deactivation. Facilitates cell adhesion, most probably through interaction with cell surface lectins and cadherin. The protein is Olfactomedin-4 (Olfm4) of Mus musculus (Mouse).